We begin with the raw amino-acid sequence, 310 residues long: p-hydroxybenzoic acid efflux pump subunit AaeA (310 aa).

A helical transmembrane segment spans residues 12 to 32 (AITVVLVILAFIAIFNAWVYY).

The protein belongs to the membrane fusion protein (MFP) (TC 8.A.1) family.

The protein localises to the cell inner membrane. In terms of biological role, forms an efflux pump with AaeB. The protein is p-hydroxybenzoic acid efflux pump subunit AaeA of Escherichia coli O17:K52:H18 (strain UMN026 / ExPEC).